The sequence spans 529 residues: Neuronal acetylcholine receptor subunit alpha-2 (529 aa).

The first 26 residues, Met-1 to Gly-26, serve as a signal peptide directing secretion. A disordered region spans residues Glu-27–Thr-56. The Extracellular portion of the chain corresponds to Glu-27–Leu-264. Asn-79 and Asn-129 each carry an N-linked (GlcNAc...) asparagine glycan. Cys-183 and Cys-197 are joined by a disulfide. Asn-235 carries an N-linked (GlcNAc...) asparagine glycan. A disulfide bond links Cys-247 and Cys-248. 3 consecutive transmembrane segments (helical) span residues Pro-265–Leu-289, Ile-297–Thr-315, and Tyr-331–Val-352. At His-353 to Arg-502 the chain is on the cytoplasmic side. Residues Ile-503–Leu-521 traverse the membrane as a helical segment.

The protein belongs to the ligand-gated ion channel (TC 1.A.9) family. Acetylcholine receptor (TC 1.A.9.1) subfamily. Alpha-2/CHRNA2 sub-subfamily. As to quaternary structure, neuronal AChR is composed of two different types of subunits: alpha and non-alpha (beta). CHRNA2/alpha-2 subunit can be combined to CHRNB2/beta-2 or CHRNB4/beta-4 to give rise to functional receptors. Both CHRNA2:CHRNB2 and CHRNA2:CHRNB4 nAChR complexes are heteropentamers with two subtypes: LS (low agonist sensitivity) with a (CHRNA2)3:(CHRNB2/4)2 and HS (high agonist sensitivity) with a (CHRNA2)2:(CHRNB2/4)3 stoichiometries; the subtypes differ in their subunit binding interfaces which are involved in ligand binding.

Its subcellular location is the synaptic cell membrane. The protein resides in the cell membrane. The catalysed reaction is Ca(2+)(in) = Ca(2+)(out). The enzyme catalyses K(+)(in) = K(+)(out). It catalyses the reaction Na(+)(in) = Na(+)(out). Its function is as follows. Component of neuronal acetylcholine receptors (nAChRs) that function as pentameric, ligand-gated cation channels with high calcium permeability among other activities. nAChRs are excitatory neurotrasnmitter receptors formed by a collection of nAChR subunits known to mediate synaptic transmission in the nervous system and the neuromuscular junction. Each nAchR subunit confers differential attributes to channel properties, including activation, deactivation and desensitization kinetics, pH sensitivity, cation permeability, and binding to allosteric modulators. CHRNA2 forms heteropentameric neuronal acetylcholine receptors with CHRNB2 and CHRNB4 and plays a role in nicotine dependence. The chain is Neuronal acetylcholine receptor subunit alpha-2 from Homo sapiens (Human).